Here is a 311-residue protein sequence, read N- to C-terminus: Methionyl-tRNA formyltransferase (311 aa).

A (6S)-5,6,7,8-tetrahydrofolate-binding site is contributed by 110-113 (SLLP).

This sequence belongs to the Fmt family.

It carries out the reaction L-methionyl-tRNA(fMet) + (6R)-10-formyltetrahydrofolate = N-formyl-L-methionyl-tRNA(fMet) + (6S)-5,6,7,8-tetrahydrofolate + H(+). Its function is as follows. Attaches a formyl group to the free amino group of methionyl-tRNA(fMet). The formyl group appears to play a dual role in the initiator identity of N-formylmethionyl-tRNA by promoting its recognition by IF2 and preventing the misappropriation of this tRNA by the elongation apparatus. The chain is Methionyl-tRNA formyltransferase from Streptococcus equi subsp. equi (strain 4047).